The primary structure comprises 351 residues: Glycerol-1-phosphate dehydrogenase [NAD(P)+] (351 aa).

NAD(+)-binding positions include G97–D101 and T119–S122. D124 contributes to the substrate binding site. S128 lines the NAD(+) pocket. D171 contributes to the substrate binding site. Positions 171 and 251 each coordinate Zn(2+). Position 255 (H255) interacts with substrate. H267 is a Zn(2+) binding site.

The protein belongs to the glycerol-1-phosphate dehydrogenase family. Homodimer. Zn(2+) serves as cofactor.

The protein resides in the cytoplasm. It catalyses the reaction sn-glycerol 1-phosphate + NAD(+) = dihydroxyacetone phosphate + NADH + H(+). It carries out the reaction sn-glycerol 1-phosphate + NADP(+) = dihydroxyacetone phosphate + NADPH + H(+). It functions in the pathway membrane lipid metabolism; glycerophospholipid metabolism. Functionally, catalyzes the NAD(P)H-dependent reduction of dihydroxyacetonephosphate (DHAP or glycerone phosphate) to glycerol 1-phosphate (G1P). The G1P thus generated is used as the glycerophosphate backbone of phospholipids in the cellular membranes of Archaea. This is Glycerol-1-phosphate dehydrogenase [NAD(P)+] from Saccharolobus islandicus (strain Y.N.15.51 / Yellowstone #2) (Sulfolobus islandicus).